Consider the following 101-residue polypeptide: UPF0213 protein lp_2058 (101 aa).

In terms of domain architecture, GIY-YIG spans K15–K92.

The protein belongs to the UPF0213 family.

This chain is UPF0213 protein lp_2058, found in Lactiplantibacillus plantarum (strain ATCC BAA-793 / NCIMB 8826 / WCFS1) (Lactobacillus plantarum).